We begin with the raw amino-acid sequence, 451 residues long: Aspartate aminotransferase, mitochondrial (451 aa).

L-aspartate-binding residues include G52, W155, and N216. N6-(pyridoxal phosphate)lysine is present on K286. R423 lines the L-aspartate pocket.

The protein belongs to the class-I pyridoxal-phosphate-dependent aminotransferase family. As to quaternary structure, homodimer. It depends on pyridoxal 5'-phosphate as a cofactor.

The protein resides in the mitochondrion matrix. The catalysed reaction is L-aspartate + 2-oxoglutarate = oxaloacetate + L-glutamate. In terms of biological role, plays a key role in amino acid metabolism. Important for metabolite exchange between mitochondria and cytosol. This Saccharomyces cerevisiae (strain ATCC 204508 / S288c) (Baker's yeast) protein is Aspartate aminotransferase, mitochondrial (AAT1).